We begin with the raw amino-acid sequence, 130 residues long: Small ribosomal subunit protein uS8 (130 aa).

This sequence belongs to the universal ribosomal protein uS8 family. In terms of assembly, part of the 30S ribosomal subunit.

One of the primary rRNA binding proteins, it binds directly to 16S rRNA central domain where it helps coordinate assembly of the platform of the 30S subunit. The protein is Small ribosomal subunit protein uS8 of Halobacterium salinarum (strain ATCC 29341 / DSM 671 / R1).